The sequence spans 188 residues: Elongation factor P (188 aa).

Belongs to the elongation factor P family.

The protein resides in the cytoplasm. Its pathway is protein biosynthesis; polypeptide chain elongation. Its function is as follows. Involved in peptide bond synthesis. Stimulates efficient translation and peptide-bond synthesis on native or reconstituted 70S ribosomes in vitro. Probably functions indirectly by altering the affinity of the ribosome for aminoacyl-tRNA, thus increasing their reactivity as acceptors for peptidyl transferase. The protein is Elongation factor P of Phenylobacterium zucineum (strain HLK1).